The following is a 181-amino-acid chain: TATA-box-binding protein (181 aa).

2 repeat units span residues 7-83 (IVNV…IKEL) and 98-173 (VQNM…LTTL).

This sequence belongs to the TBP family.

General factor that plays a role in the activation of archaeal genes transcribed by RNA polymerase. Binds specifically to the TATA box promoter element which lies close to the position of transcription initiation. The polypeptide is TATA-box-binding protein (Methanococcus maripaludis (strain C7 / ATCC BAA-1331)).